We begin with the raw amino-acid sequence, 82 residues long: Protein WFDC11 (82 aa).

The N-terminal stretch at 1–21 is a signal peptide; sequence MKPSWFPCLVFLCMLLLSALG.

The protein resides in the secreted. The polypeptide is Protein WFDC11 (Wfdc11) (Mus musculus (Mouse)).